The chain runs to 110 residues: Nucleoid-associated protein YE3092 (110 aa).

It belongs to the YbaB/EbfC family. Homodimer.

It localises to the cytoplasm. The protein localises to the nucleoid. Binds to DNA and alters its conformation. May be involved in regulation of gene expression, nucleoid organization and DNA protection. The protein is Nucleoid-associated protein YE3092 of Yersinia enterocolitica serotype O:8 / biotype 1B (strain NCTC 13174 / 8081).